The chain runs to 395 residues: Renin (395 aa).

The first 21 residues, 1–21, serve as a signal peptide directing secretion; sequence MLRSWEFVLLISCFLCFSSDA. Positions 22–43 are cleaved as a propeptide — activation peptide; that stretch reads LQRISLKKMPSIRETLQEMGMK. N-linked (GlcNAc...) asparagine glycosylation is present at N64. The Peptidase A1 domain occupies 79–392; it reads YYGEISIGTP…DRQNNRIGFA (314 aa). The active site involves D97. Intrachain disulfides connect C110–C117 and C274–C278. The active site involves D283. Residues C316 and C351 are joined by a disulfide bond.

This sequence belongs to the peptidase A1 family. In terms of processing, N-glycosylated. As to expression, expressed by the venom gland (at protein level).

Its subcellular location is the secreted. It catalyses the reaction Cleavage of Leu-|-Xaa bond in angiotensinogen to generate angiotensin I.. Inhibited completely by aspartyl protease inhibitor pepstatin A, but not by the serine- or metalloproteinase inhibitors PMSF or EDTA. In terms of biological role, renin is a highly specific endopeptidase, whose only known function is to generate angiotensin I from angiotensinogen in the plasma, initiating a cascade of reactions that produce an elevation of blood pressure and increased sodium retention by the kidney. This protein is also found in snake venom and shown to specifically cleave human and porcine angiotensinogen into angiotensin I. It does not have general protease activity, no cleavage of alpha or beta casein. May be directly responsible for elevation of blood pressure in the victims of envenomation. This Echis ocellatus (Ocellated saw-scaled viper) protein is Renin.